Here is a 47-residue protein sequence, read N- to C-terminus: Defensin-like protein 1 (47 aa).

4 disulfide bridges follow: C3–C47, C14–C34, C20–C41, and C24–C43.

In terms of assembly, monomer and homodimer.

Its function is as follows. Inhibits trypsin but not chymotrypsin. The polypeptide is Defensin-like protein 1 (Vigna unguiculata (Cowpea)).